Reading from the N-terminus, the 780-residue chain is LPS-assembly protein LptD (780 aa).

An N-terminal signal peptide occupies residues 1-24 (MKKRFPTLLATLIWTALYSQHTLA).

It belongs to the LptD family. Component of the lipopolysaccharide transport and assembly complex. Interacts with LptE and LptA.

The protein resides in the cell outer membrane. Functionally, together with LptE, is involved in the assembly of lipopolysaccharide (LPS) at the surface of the outer membrane. The sequence is that of LPS-assembly protein LptD from Yersinia pseudotuberculosis serotype I (strain IP32953).